The following is a 141-amino-acid chain: Ribonuclease P protein component (141 aa).

2 disordered regions span residues Arg-37 to Thr-56 and Arg-114 to Lys-141. Residues Arg-114 to Arg-123 show a composition bias toward basic and acidic residues.

The protein belongs to the RnpA family. As to quaternary structure, consists of a catalytic RNA component (M1 or rnpB) and a protein subunit.

The enzyme catalyses Endonucleolytic cleavage of RNA, removing 5'-extranucleotides from tRNA precursor.. RNaseP catalyzes the removal of the 5'-leader sequence from pre-tRNA to produce the mature 5'-terminus. It can also cleave other RNA substrates such as 4.5S RNA. The protein component plays an auxiliary but essential role in vivo by binding to the 5'-leader sequence and broadening the substrate specificity of the ribozyme. This is Ribonuclease P protein component from Brucella suis biovar 1 (strain 1330).